We begin with the raw amino-acid sequence, 334 residues long: MNHSEQASAYKAVKNIVLVGRTGNGKSATGNSLIGKDVFVSEAKATGVTKTCQTYKAVTPGGSRINVIDTPGLFDLSVSAEFISKEIINCLRLAEGGLHVVVLVLSVRTRITQEEENTLSTLQVLFGNEILDYLIVLFTGGDELEANNQTLDDYFHQGCPYFLKTVLGLCDDRKVMFNNMTKDKHKKVEQVQQFLALVAKVEERNEGKPFRGKMYLEIKEETEWLKKQKKAVEASNLGEAELAKMKKELQMEHDTRMSQMEDMVKNMLKETSAAHERMVSMLNENLENAHRENIDLRKAHDHEQKKRMMIQLGLGVPGALGMIAPAALAMCSIL.

Positions 11-219 constitute an AIG1-type G domain; it reads KAVKNIVLVG…FRGKMYLEIK (209 aa). Residues 20–27 form a G1 region; sequence GRTGNGKS. Residues 20-28 and Ser-41 each bind GTP; that span reads GRTGNGKSA. The G2 stretch occupies residues 47–51; it reads GVTKT. A G3 region spans residues 69-72; the sequence is DTPG. Positions 139–142 are G4; the sequence is TGGD. The G5 stretch occupies residues 178 to 180; the sequence is NNM. Asn-179 contributes to the GTP binding site. The stretch at 272 to 306 forms a coiled coil; sequence SAAHERMVSMLNENLENAHRENIDLRKAHDHEQKK.

This sequence belongs to the TRAFAC class TrmE-Era-EngA-EngB-Septin-like GTPase superfamily. AIG1/Toc34/Toc159-like paraseptin GTPase family. IAN subfamily. Mostly expressed in pollen. Also detected in lateral roots and radicles.

The chain is Immune-associated nucleotide-binding protein 3 from Arabidopsis thaliana (Mouse-ear cress).